Here is a 76-residue protein sequence, read N- to C-terminus: UPF0346 protein LBA0976 (76 aa).

It belongs to the UPF0346 family.

The protein is UPF0346 protein LBA0976 of Lactobacillus acidophilus (strain ATCC 700396 / NCK56 / N2 / NCFM).